A 434-amino-acid polypeptide reads, in one-letter code: Trigger factor (434 aa).

The PPIase FKBP-type domain maps to 161 to 246 (EDRATLDFTG…LKKVEVRELP (86 aa)).

This sequence belongs to the FKBP-type PPIase family. Tig subfamily.

It localises to the cytoplasm. The catalysed reaction is [protein]-peptidylproline (omega=180) = [protein]-peptidylproline (omega=0). Functionally, involved in protein export. Acts as a chaperone by maintaining the newly synthesized protein in an open conformation. Functions as a peptidyl-prolyl cis-trans isomerase. This is Trigger factor from Yersinia enterocolitica serotype O:8 / biotype 1B (strain NCTC 13174 / 8081).